Consider the following 394-residue polypeptide: V-type proton ATPase subunit C (394 aa).

S17 carries the phosphoserine modification.

The protein belongs to the V-ATPase C subunit family. V-ATPase is a heteromultimeric enzyme composed of a peripheral catalytic V1 complex (components A to H) attached to an integral membrane V0 proton pore complex (components: a, c, c', c'', d, e, f and VOA1).

The protein resides in the cytoplasm. Its subcellular location is the vacuole membrane. Its function is as follows. Subunit of the V1 complex of vacuolar(H+)-ATPase (V-ATPase), a multisubunit enzyme composed of a peripheral complex (V1) that hydrolyzes ATP and a membrane integral complex (V0) that translocates protons. V-ATPase is responsible for acidifying and maintaining the pH of intracellular compartments. Subunit C is necessary for the assembly of the catalytic sector of the enzyme and is likely to have a specific function in its catalytic activity. Reversibly leaves the enzyme after glucose depletion, causing the catalytic subcomplex V1 to detach from the V0 section. This Schizosaccharomyces pombe (strain 972 / ATCC 24843) (Fission yeast) protein is V-type proton ATPase subunit C.